The following is a 120-amino-acid chain: NAD(P)H-quinone oxidoreductase subunit 3, chloroplastic (120 aa).

Transmembrane regions (helical) follow at residues 9–29, 64–84, and 88–108; these read IFWA…LISG, MFAL…PWAM, and VLGV…IVGS.

Belongs to the complex I subunit 3 family. As to quaternary structure, NDH is composed of at least 16 different subunits, 5 of which are encoded in the nucleus.

It is found in the plastid. Its subcellular location is the chloroplast thylakoid membrane. It catalyses the reaction a plastoquinone + NADH + (n+1) H(+)(in) = a plastoquinol + NAD(+) + n H(+)(out). It carries out the reaction a plastoquinone + NADPH + (n+1) H(+)(in) = a plastoquinol + NADP(+) + n H(+)(out). Functionally, NDH shuttles electrons from NAD(P)H:plastoquinone, via FMN and iron-sulfur (Fe-S) centers, to quinones in the photosynthetic chain and possibly in a chloroplast respiratory chain. The immediate electron acceptor for the enzyme in this species is believed to be plastoquinone. Couples the redox reaction to proton translocation, and thus conserves the redox energy in a proton gradient. This chain is NAD(P)H-quinone oxidoreductase subunit 3, chloroplastic, found in Carica papaya (Papaya).